The primary structure comprises 427 residues: MEAYIRQKRATPGMVQASDLQLVRPMSAVNRNGREVHAYDGPMQFMMSPSNPDQIISSSGSPTTVTATGTGTTTTTGSVTTTPTSPYSDATLEKLTPSSQDSEDEESTPVDILPSSNSFDRHSDGHLTHSAPISPALNNNVSRDSQQDSGSSGNLKSMEHSSPQASGHNDAEGDVAGPIEQWVTQPAAQGVLYKCRITRDRKGMDRGLFPIYYLHLERDYGKRLFCLAGRKRKKSKTSNYIISCDPTDLSRQADGFVGKLRSNVFGTTFFVYDNGKKDDPVSPRLDLAVVIYDTNILGFKGPRNMTVLLPGMTEDDQRVKINSSDSHGQGLLDSWKSKHMDNVVELHNKTPIWNDETQSYVLNFHGRVTQASVKNFQLVHDSDPDYIVMQFGRTSDDIFTMDFRYPLCAFQAFAIALSSFDGKLACE.

A disordered region spans residues 48-174; the sequence is SPSNPDQIIS…ASGHNDAEGD (127 aa). Residues 57-86 are compositionally biased toward low complexity; it reads SSSGSPTTVTATGTGTTTTTGSVTTTPTSP.

It belongs to the TUB family.

Its subcellular location is the cytoplasm. The protein resides in the nucleus. The protein is Protein king tubby 1 (king-tubby1) of Culex quinquefasciatus (Southern house mosquito).